We begin with the raw amino-acid sequence, 744 residues long: Leukocyte immunoglobulin-like receptor subfamily B member 3A (744 aa).

The N-terminal stretch at 1–24 (MTFTFTALLCLGLTLGLWIPVLTG) is a signal peptide. Over 25–543 (SLPKPILRVQ…PPDGLQRYLK (519 aa)) the chain is Extracellular. Ig-like C2-type domains are found at residues 26–119 (LPKP…VVTG), 121–221 (YSKP…LVSG), 223–316 (LQKP…VVTG), 320–419 (YHPL…LITG), and 426–520 (FLSV…IVSG). 3 disulfide bridges follow: cysteine 49–cysteine 98, cysteine 144–cysteine 197, and cysteine 246–cysteine 295. A glycan (N-linked (GlcNAc...) asparagine) is linked at asparagine 79. The N-linked (GlcNAc...) asparagine glycan is linked to asparagine 338. Cysteine 343 and cysteine 395 form a disulfide bridge. Asparagine 440 carries an N-linked (GlcNAc...) asparagine glycan. Cysteine 445 and cysteine 496 are oxidised to a cystine. The chain crosses the membrane as a helical span at residues 544-564 (ALIGVSVAFLLFLFILIFILL). Topologically, residues 565 to 744 (RRRHQEKFRK…PGAVPKNKKQ (180 aa)) are cytoplasmic. Positions 572-584 (FRKDDEDAQKGKE) are enriched in basic and acidic residues. Disordered regions lie at residues 572–617 (FRKD…ESLY), 630–652 (ELDT…VEPS), and 667–744 (EQLN…NKKQ). An ITIM motif 1 motif is present at residues 615-620 (SLYASV). 2 consecutive short sequence motifs (ITIM motif) follow at residues 695 to 700 (VTYAQL) and 725 to 730 (SVYAAL). 2 positions are modified to phosphotyrosine; by LYN: tyrosine 697 and tyrosine 727.

As to quaternary structure, interacts with LYN, PTPN6/SHP-1 and PTPN11/SHP-2. Phosphorylated on tyrosine residues by LYN. Phosphorylation at Tyr-697 and Tyr-727 is important for interaction with PTPN6/SHP-1 and PTPN11/SHP-2.

Its subcellular location is the cell membrane. In terms of biological role, may act as receptor for class I MHC antigens. Becomes activated upon coligation with immune receptors, such as FCGR2B and the B-cell receptor. Down-regulates antigen-induced B-cell activation by recruiting phosphatases to its immunoreceptor tyrosine-based inhibitor motifs (ITIM). This chain is Leukocyte immunoglobulin-like receptor subfamily B member 3A, found in Rattus norvegicus (Rat).